A 236-amino-acid chain; its full sequence is Thrombin-like enzyme kangshuanmei (236 aa).

Positions 1-227 (VIGGDECNIN…HLDWIQSIIA (227 aa)) constitute a Peptidase S1 domain. Cystine bridges form between cysteine 7–cysteine 141, cysteine 28–cysteine 44, cysteine 78–cysteine 234, cysteine 120–cysteine 188, cysteine 152–cysteine 167, and cysteine 178–cysteine 203. Histidine 43 (charge relay system) is an active-site residue. The N-linked (GlcNAc...) asparagine glycan is linked to asparagine 81. The active-site Charge relay system is aspartate 88. N-linked (GlcNAc...) asparagine glycosylation is found at asparagine 99 and asparagine 148. The active-site Charge relay system is serine 182. The N-linked (GlcNAc...) asparagine glycan is linked to asparagine 229.

Belongs to the peptidase S1 family. Snake venom subfamily. Monomer. In terms of processing, N-glycosylated by units composed of Fuc, Man, GlcNAc, Gal and NeuAC residues. As to expression, expressed by the venom gland.

Its subcellular location is the secreted. With respect to regulation, inhibited by 4-(2-aminoethyl)-benzensulfonyl fluoride. Not inhibited by antithrombin-III. Its function is as follows. Thrombin-like snake venom serine protease. Cleaves bonds after Arg and Lys, converts fibrinogen (FGA and FGB) to fibrin and releases both fibrinopeptides A and B, and fibrinogen peptide Bbeta1-42. Has a blood clotting activity. In Gloydius brevicauda (Korean slamosa snake), this protein is Thrombin-like enzyme kangshuanmei.